The sequence spans 206 residues: Imidazole glycerol phosphate synthase subunit HisH (206 aa).

The region spanning 1–206 is the Glutamine amidotransferase type-1 domain; that stretch reads MIVIIDYGMG…LRILKNFGDM (206 aa). Cys-79 acts as the Nucleophile in catalysis. Active-site residues include His-188 and Glu-190.

As to quaternary structure, heterodimer of HisH and HisF.

It is found in the cytoplasm. The enzyme catalyses 5-[(5-phospho-1-deoxy-D-ribulos-1-ylimino)methylamino]-1-(5-phospho-beta-D-ribosyl)imidazole-4-carboxamide + L-glutamine = D-erythro-1-(imidazol-4-yl)glycerol 3-phosphate + 5-amino-1-(5-phospho-beta-D-ribosyl)imidazole-4-carboxamide + L-glutamate + H(+). It carries out the reaction L-glutamine + H2O = L-glutamate + NH4(+). Its pathway is amino-acid biosynthesis; L-histidine biosynthesis; L-histidine from 5-phospho-alpha-D-ribose 1-diphosphate: step 5/9. Functionally, IGPS catalyzes the conversion of PRFAR and glutamine to IGP, AICAR and glutamate. The HisH subunit catalyzes the hydrolysis of glutamine to glutamate and ammonia as part of the synthesis of IGP and AICAR. The resulting ammonia molecule is channeled to the active site of HisF. The polypeptide is Imidazole glycerol phosphate synthase subunit HisH (Syntrophotalea carbinolica (strain DSM 2380 / NBRC 103641 / GraBd1) (Pelobacter carbinolicus)).